A 614-amino-acid chain; its full sequence is Dolichyl-diphosphooligosaccharide--protein glycosyltransferase subunit 1A (614 aa).

An N-terminal signal peptide occupies residues 1-25; sequence MKQSSVVDLLLLLLAIALLATPAFS. Residues 26–432 lie on the Lumenal side of the membrane; that stretch reads DLVLSKVERR…QVYYKFSNIN (407 aa). Residues N94 and N299 are each glycosylated (N-linked (GlcNAc...) asparagine). A Glycyl lysine isopeptide (Lys-Gly) (interchain with G-Cter in ubiquitin) cross-link involves residue K311. A glycan (N-linked (GlcNAc...) asparagine) is linked at N352. The chain crosses the membrane as a helical span at residues 433–453; sequence LLSEPLMLISGFFILFITCII. The Cytoplasmic portion of the chain corresponds to 454-614; the sequence is YTRADISISK…EDLLEFIDEI (161 aa).

The protein belongs to the OST1 family. As to quaternary structure, component of the oligosaccharyltransferase (OST) complex.

The protein resides in the endoplasmic reticulum membrane. It participates in protein modification; protein glycosylation. Subunit of the oligosaccharyl transferase (OST) complex that catalyzes the initial transfer of a defined glycan (Glc(3)Man(9)GlcNAc(2) in eukaryotes) from the lipid carrier dolichol-pyrophosphate to an asparagine residue within an Asn-X-Ser/Thr consensus motif in nascent polypeptide chains, the first step in protein N-glycosylation. N-glycosylation occurs cotranslationally and the complex associates with the Sec61 complex at the channel-forming translocon complex that mediates protein translocation across the endoplasmic reticulum (ER). All subunits are required for a maximal enzyme activity. The polypeptide is Dolichyl-diphosphooligosaccharide--protein glycosyltransferase subunit 1A (OST1A) (Arabidopsis thaliana (Mouse-ear cress)).